A 1232-amino-acid polypeptide reads, in one-letter code: MANGVIPPPGGASPLPQVRVPLEEPPLSPDVEEEDDDLGKTLAVSRFGDLISKPPAWDPEKPSRSYSERDFEFHRHTSHHTHHPLSARLPPPHKLRRLPPTSARHTRRKRKKEKTSAPPSEETPPIQEEGGAGVEEEEEEEEEEEGESEAEPVEPPPSGTPQKAKFSIGSDEDDSPGLPGRAAVTKPLPSVGPQTDKSPQHSSSSPSPRAQASRLAGEKSRPWSPSASYDLRERLCPGSALGNSGGPEQQVPTDEAEAQMLGSADLDDMKSHRLEDNPGVRRHLVKKPSRTQGGRGSPSGLAPILRRKKKKKKLDRRPHEVFVELNELMLDRSQEPHWRETARWIKFEEDVEEETERWGKPHVASLSFRSLLELRRTIAHGAALLDLEQTTLPGIAHLVVETMIVSDQIRPEDRASVLRTLLLKHSHPNDDKDSGFFPRNPSSSSMNSVLGNHHPTPSHGPDGAVPTMADDLGEPAPLWPHDPDAKEKPLHMPGGDGHRGKSLKLLEKIPEDAEATVVLVGCVPFLEQPAAAFVRLNEAVLLESVLEVPVPVCFLFVMLGPSHTSTDYHELGRSIATLMSDKLFHEAAYQADDRQDLLSAISEFLDGSIVIPPSEVEGRDLLRSVAAFQRELLRKRREREQTKVEMTTRGGYTAPGKELSLELGGSEATPEDDPLLRTGSVFGGLVRDVRRRYPHYPSDLRDALHSQCVAAVLFIYFAALSPAITFGGLLGEKTEGLMGVSELIVSTAVLGVLFSLLGAQPLLVVGFSGPLLVFEEAFFKFCRAQDLEYLTGRVWVGLWLVVFVLALVAAEGSFLVRYISPFTQEIFAFLISLIFIYETFYKLYKVFTEHPLLPFYPPEGALEGSLDAGLEPNGSALPPTEGPPSPRNQPNTALLSLILMLGTFFIAFFLRKFRNSRFLGGKARRIIGDFGIPISILVMVLVDYSITDTYTQKLTVPTGLSVTPPDKRSWFIPPLGSARPFPPWMMVAAAVPALLVLILIFMETQITALIVSQKARRLLKGSGFHLDLLLIGSLGGLCGLFGLPWLTAATVRSVTHVNALTVMRTAIAPGDKPQIQEVREQRVTGVLIASLVGLSIVMGAVLRRIPLAVLFGIFLYMGVTSLSGIQLSQRLLLILMPAKHHPEQPYVTKVKTWRMHLFICIQLGCIALLWVVKSTAASLAFPFLLLLTVPLRHCLLPRLFQDRELQALDSEDAEPNFDEDGQDEYNELHMPV.

The segment covering M1–G11 has biased composition (pro residues). Disordered regions lie at residues M1–R316 and N429–H498. At M1–C708 the chain is on the cytoplasmic side. Over residues D58 to R75 the composition is skewed to basic and acidic residues. 2 stretches are compositionally biased toward basic residues: residues H76–R97 and R104–E113. The segment covering V134 to P152 has biased composition (acidic residues). Phosphoserine is present on residues S167, S170, S175, and S198. A compositionally biased stretch (low complexity) spans Q200 to R214. Over residues D267–G279 the composition is skewed to basic and acidic residues. Residues V280 to S289 are compositionally biased toward basic residues. R295 bears the Omega-N-methylarginine mark. Basic residues predominate over residues L305 to R316. Residues N440–L450 show a composition bias toward polar residues. Residues H481–H498 show a composition bias toward basic and acidic residues. Helical transmembrane passes span V709–G731, L737–F774, V794–V816, I826–F847, and A893–L910. The interval V709–V1232 is membrane (anion exchange). Residues R911–R925 are Cytoplasmic-facing. The next 5 helical transmembrane spans lie at I926–I946, P980–M1002, L1028–A1049, V1083–S1128, and M1155–L1191. C1165 carries S-palmitoyl cysteine lipidation.

Belongs to the anion exchanger (TC 2.A.31) family.

The protein resides in the cell membrane. It carries out the reaction hydrogencarbonate(in) + chloride(out) = hydrogencarbonate(out) + chloride(in). Functionally, sodium-independent anion exchanger which mediates the electroneutral exchange of chloride for bicarbonate ions across the cell membrane. May be involved in the regulation of intracellular pH, and the modulation of cardiac action potential. The sequence is that of Anion exchange protein 3 (SLC4A3) from Pongo abelii (Sumatran orangutan).